The following is a 214-amino-acid chain: Leucyl/phenylalanyl-tRNA--protein transferase (214 aa).

The interval 194–214 (FAPPGYSPDPASVVQRSSQTS) is disordered.

Belongs to the L/F-transferase family.

The protein resides in the cytoplasm. The enzyme catalyses N-terminal L-lysyl-[protein] + L-leucyl-tRNA(Leu) = N-terminal L-leucyl-L-lysyl-[protein] + tRNA(Leu) + H(+). It catalyses the reaction N-terminal L-arginyl-[protein] + L-leucyl-tRNA(Leu) = N-terminal L-leucyl-L-arginyl-[protein] + tRNA(Leu) + H(+). The catalysed reaction is L-phenylalanyl-tRNA(Phe) + an N-terminal L-alpha-aminoacyl-[protein] = an N-terminal L-phenylalanyl-L-alpha-aminoacyl-[protein] + tRNA(Phe). Functions in the N-end rule pathway of protein degradation where it conjugates Leu, Phe and, less efficiently, Met from aminoacyl-tRNAs to the N-termini of proteins containing an N-terminal arginine or lysine. The sequence is that of Leucyl/phenylalanyl-tRNA--protein transferase from Cereibacter sphaeroides (strain ATCC 17025 / ATH 2.4.3) (Rhodobacter sphaeroides).